Consider the following 389-residue polypeptide: Phosphoglycerate kinase (389 aa).

Residues 19-21 (DYN), Arg34, 57-60 (HLGR), Arg117, and Arg150 contribute to the substrate site. Residues Lys200, Gly288, Glu319, and 347–350 (GGDS) each bind ATP.

Belongs to the phosphoglycerate kinase family. In terms of assembly, monomer.

Its subcellular location is the cytoplasm. The catalysed reaction is (2R)-3-phosphoglycerate + ATP = (2R)-3-phospho-glyceroyl phosphate + ADP. The protein operates within carbohydrate degradation; glycolysis; pyruvate from D-glyceraldehyde 3-phosphate: step 2/5. The protein is Phosphoglycerate kinase of Deinococcus geothermalis (strain DSM 11300 / CIP 105573 / AG-3a).